The chain runs to 170 residues: Protein-export protein SecB (170 aa).

The protein belongs to the SecB family. Homotetramer, a dimer of dimers. One homotetramer interacts with 1 SecA dimer.

It localises to the cytoplasm. Functionally, one of the proteins required for the normal export of preproteins out of the cell cytoplasm. It is a molecular chaperone that binds to a subset of precursor proteins, maintaining them in a translocation-competent state. It also specifically binds to its receptor SecA. This is Protein-export protein SecB from Xanthomonas campestris pv. campestris (strain 8004).